The primary structure comprises 95 residues: Small ribosomal subunit protein uS19 (95 aa).

This sequence belongs to the universal ribosomal protein uS19 family.

Its function is as follows. Protein S19 forms a complex with S13 that binds strongly to the 16S ribosomal RNA. In Roseiflexus castenholzii (strain DSM 13941 / HLO8), this protein is Small ribosomal subunit protein uS19.